A 236-amino-acid polypeptide reads, in one-letter code: MITLPARPESLTFAPQQSALIVVDMQNAYASQGGYLDLAGFDVSATRPVIVNINTAVAAARAAGMLIIWFQNGWDDQYVEAGGPGSPNYHKSNALKTMRQRPELQGKLLAKGGWDYQLVDELTPQEGDIVLPKPRYSGFFNTPLDSILRSRGIRHLVFTGIATNVCVESTLRDGFFLEYFGIVLEDATHQAGPAFAQQAALFNIETFFGWVSDVESFCHALSPATPLSLAKEKRYA.

The active-site Proton acceptor is the Asp-24. Residue Lys-133 is part of the active site. Cys-166 acts as the Nucleophile in catalysis.

The protein belongs to the isochorismatase family. RutB subfamily.

It carries out the reaction (Z)-3-ureidoacrylate + H2O + H(+) = (Z)-3-aminoacrylate + NH4(+) + CO2. The catalysed reaction is (Z)-3-ureidoacrylate + H2O = (Z)-3-aminoacrylate + carbamate + H(+). The enzyme catalyses (Z)-2-methylureidoacrylate + H2O + H(+) = (Z)-2-methylaminoacrylate + NH4(+) + CO2. Hydrolyzes ureidoacrylate to form aminoacrylate and carbamate. The carbamate hydrolyzes spontaneously, thereby releasing one of the nitrogen atoms of the pyrimidine ring as ammonia and one of its carbon atoms as CO2. This Klebsiella pneumoniae (strain 342) protein is Ureidoacrylate amidohydrolase RutB.